A 371-amino-acid polypeptide reads, in one-letter code: Probable acetylxylan esterase A (371 aa).

Residues 1–19 form the signal peptide; sequence MRALSVFVALFSFLALSSA. The interval 32–304 is catalytic; that stretch reads GSLQQVTNFG…GEQDMEWFGF (273 aa). Serine 149 acts as the Charge relay system in catalysis. Asparagine 191 is a glycosylation site (N-linked (GlcNAc...) asparagine). A disordered region spans residues 305–335; that stretch reads TGGSSSTTTTATTPPTTSTTTSSGGSSTSTG. Residues 305–336 form a ser/Thr-rich linker region; that stretch reads TGGSSSTTTTATTPPTTSTTTSSGGSSTSTGV. Over residues 307 to 335 the composition is skewed to low complexity; that stretch reads GSSSTTTTATTPPTTSTTTSSGGSSTSTG. Residues 335–371 form the CBM1 domain; the sequence is GVAEHWGQCGGNGWTGPTACASGYTCTVINEWYSQCL.

Belongs to the carbohydrate esterase 1 (CE1) family. AxeA subfamily. In terms of assembly, monomer.

The protein localises to the secreted. It catalyses the reaction Deacetylation of xylans and xylo-oligosaccharides.. Its pathway is glycan degradation; xylan degradation. Functionally, acetylxylan esterase involved in the hydrolysis of xylan, a major structural heterogeneous polysaccharide found in plant biomass representing the second most abundant polysaccharide in the biosphere, after cellulose. Degrades acetylated xylans by cleaving acetyl side groups from the hetero-xylan backbone. The sequence is that of Probable acetylxylan esterase A (axeA) from Aspergillus fumigatus (strain ATCC MYA-4609 / CBS 101355 / FGSC A1100 / Af293) (Neosartorya fumigata).